The sequence spans 96 residues: Putative pterin-4-alpha-carbinolamine dehydratase (96 aa).

It belongs to the pterin-4-alpha-carbinolamine dehydratase family.

It catalyses the reaction (4aS,6R)-4a-hydroxy-L-erythro-5,6,7,8-tetrahydrobiopterin = (6R)-L-erythro-6,7-dihydrobiopterin + H2O. The chain is Putative pterin-4-alpha-carbinolamine dehydratase from Prochlorococcus marinus (strain MIT 9515).